Consider the following 173-residue polypeptide: C-phycocyanin beta subunit (173 aa).

Asn-73 is modified (N4-methylasparagine). Residues Cys-83 and Cys-154 each contribute to the (2R,3E)-phycocyanobilin site.

The protein belongs to the phycobiliprotein family. In terms of assembly, heterodimer of an alpha and a beta subunit. Part of 2 PBS rod complexes, the conventional PBS rod and a photosystem I-specific CpcL-PBS rod. Contains two covalently linked bilin chromophores.

The protein resides in the cellular thylakoid membrane. Light-harvesting photosynthetic bile pigment-protein from the phycobiliprotein complex (phycobilisome, PBS). Phycocyanin is the major phycobiliprotein in the PBS rod. This is C-phycocyanin beta subunit (cpcB) from Nostoc sp. (strain PCC 7120 / SAG 25.82 / UTEX 2576).